Reading from the N-terminus, the 1220-residue chain is Plasma membrane calcium-transporting ATPase 1 (1220 aa).

Residue G2 is modified to N-acetylglycine. Residues 2 to 105 (GDMANNSVAY…KTFLQLVWEA (104 aa)) lie on the Cytoplasmic side of the membrane. 2 positions are modified to phosphoserine: S8 and S17. The chain crosses the membrane as a helical span at residues 106–126 (LQDVTLIILEIAAIVSLGLSF). Residues 127–154 (YQPPEGDNALCGEVSVGEEEGEGETGWI) are Extracellular-facing. The helical transmembrane segment at 155–175 (EGAAILLSVVCVVLVTAFNDW) threads the bilayer. The Cytoplasmic portion of the chain corresponds to 176–366 (SKEKQFRGLQ…KEKSVLQGKL (191 aa)). The tract at residues 297 to 356 (EEEKKDEKKKEKKNKKQDGAIENRNKAKAQDGAAMEMQPLKSEEGGDGDEKDKKKANLPK) is disordered. Composition is skewed to basic and acidic residues over residues 312–325 (KQDGAIENRNKAKA) and 337–356 (KSEEGGDGDEKDKKKANLPK). Phosphoserine is present on S338. Residues 367–386 (TKLAVQIGKAGLLMSAITVI) form a helical membrane-spanning segment. Residues 387-418 (ILVLYFVIDTFWVQKRPWLAECTPIYIQYFVK) lie on the Extracellular side of the membrane. Residues 419–439 (FFIIGVTVLVVAVPEGLPLAV) traverse the membrane as a helical segment. Over 440 to 855 (TISLAYSVKK…RNVYDSISKF (416 aa)) the chain is Cytoplasmic. D475 functions as the 4-aspartylphosphate intermediate in the catalytic mechanism. Mg(2+) contacts are provided by D475, T477, D797, and D801. A helical transmembrane segment spans residues 856 to 876 (LQFQLTVNVVAVIVAFTGACI). At 877 to 882 (TQDSPL) the chain is on the extracellular side. A helical transmembrane segment spans residues 883–903 (KAVQMLWVNLIMDTLASLALA). The Cytoplasmic portion of the chain corresponds to 904–927 (TEPPTESLLLRKPYGRNKPLISRT). Residues 928-948 (MMKNILGHAFYQLVVVFTLLF) traverse the membrane as a helical segment. Topologically, residues 949 to 971 (AGEKFFDIDSGRNAPLHAPPSEH) are extracellular. The chain crosses the membrane as a helical span at residues 972 to 991 (YTIVFNTFVLMQLFNEINAR). Residues 992–1005 (KIHGERNVFEGIFN) are Cytoplasmic-facing. The chain crosses the membrane as a helical span at residues 1006–1027 (NAIFCTIVLGTFVVQIIIVQFG). The Extracellular portion of the chain corresponds to 1028-1039 (GKPFSCSELSIE). A helical transmembrane segment spans residues 1040–1060 (QWLWSIFLGMGTLLWGQLIST). The Cytoplasmic segment spans residues 1061 to 1220 (IPTSRLKFLK…SPLHSLETSL (160 aa)). Positions 1100–1117 (LRRGQILWFRGLNRIQTQ) are calmodulin-binding subdomain A. T1116 carries the phosphothreonine; by PKC modification. Positions 1118–1127 (IRVVNAFRSS) are calmodulin-binding subdomain B. The segment at 1118–1220 (IRVVNAFRSS…SPLHSLETSL (103 aa)) is required for basolateral membrane targeting. Residues S1140 and S1155 each carry the phosphoserine modification. A disordered region spans residues 1160 to 1220 (PLIDDTDAED…SPLHSLETSL (61 aa)). At T1165 the chain carries Phosphothreonine. Phosphoserine is present on residues S1178 and S1182. Positions 1200-1220 (MNKSATSSSPGSPLHSLETSL) are enriched in polar residues.

Belongs to the cation transport ATPase (P-type) (TC 3.A.3) family. Type IIB subfamily. As to quaternary structure, monomer. Dimer. Oligomer. Calmodulin binding. Interacts with PDZD11. Interacts with SLC35G1 and STIM1. Interacts with YWHAE; interacts with the monomeric and dimeric forms of the YWHAE but prefer the monomer form; this interaction inhibits calcium-transporting ATPase activity. Interacts with NPTN; this interaction stabilizes ATP2B1 and increases ATPase activity; this interaction controls T cell calcium homeostasis following T cell activation. Interacts with EPB41; regulates small intestinal calcium absorption through regulation of membrane expression of ATP2B1.

It localises to the cell membrane. The protein resides in the basolateral cell membrane. It is found in the synapse. Its subcellular location is the presynaptic cell membrane. The protein localises to the cytoplasmic vesicle. It localises to the secretory vesicle. The protein resides in the synaptic vesicle membrane. It carries out the reaction Ca(2+)(in) + ATP + H2O = Ca(2+)(out) + ADP + phosphate + H(+). Its function is as follows. Catalyzes the hydrolysis of ATP coupled with the transport of calcium from the cytoplasm to the extracellular space thereby maintaining intracellular calcium homeostasis. Plays a role in blood pressure regulation through regulation of intracellular calcium concentration and nitric oxide production leading to regulation of vascular smooth muscle cells vasoconstriction. Positively regulates bone mineralization through absorption of calcium from the intestine. Plays dual roles in osteoclast differentiation and survival by regulating RANKL-induced calcium oscillations in preosteoclasts and mediating calcium extrusion in mature osteoclasts. Regulates insulin sensitivity through calcium/calmodulin signaling pathway by regulating AKT1 activation and NOS3 activation in endothelial cells. May play a role in synaptic transmission by modulating calcium and proton dynamics at the synaptic vesicles. This chain is Plasma membrane calcium-transporting ATPase 1, found in Sus scrofa (Pig).